The chain runs to 251 residues: B3 domain-containing protein At2g24670 (251 aa).

Positions 48–111 (TTPSTVMESK…SSKTREPTPG (64 aa)) are disordered. Basic and acidic residues predominate over residues 56-70 (SKSHIHDHSLRESPT). The TF-B3 DNA-binding region spans 153 to 249 (VSQIVELEFL…TLYFALVPLY (97 aa)).

Its subcellular location is the nucleus. The chain is B3 domain-containing protein At2g24670 from Arabidopsis thaliana (Mouse-ear cress).